The sequence spans 157 residues: MLTNKEIKQLIWEKADNVASKLGLEIFDILIKGSNKNKILEVVIDKADGYVSIGDCERFSKAFDPWLDEIDLFDKSYELVVSSPGLDRKLRGKADYERFKGKLAKFILKGKETKHPVVIGYIDEILEDQIKITEKDSGKLFNIDLNEIDKANLEIEL.

This sequence belongs to the RimP family.

It is found in the cytoplasm. In terms of biological role, required for maturation of 30S ribosomal subunits. This is Ribosome maturation factor RimP from Petrotoga mobilis (strain DSM 10674 / SJ95).